Reading from the N-terminus, the 165-residue chain is Nucleotide-binding protein P9215_05621 (165 aa).

Belongs to the YajQ family.

Functionally, nucleotide-binding protein. The polypeptide is Nucleotide-binding protein P9215_05621 (Prochlorococcus marinus (strain MIT 9215)).